A 549-amino-acid polypeptide reads, in one-letter code: Serine/threonine-protein phosphatase PPQ (549 aa).

A compositionally biased stretch (polar residues) spans 1–13 (MRRSPSRSNNNFA). Disordered stretches follow at residues 1–50 (MRRS…RSLP), 64–85 (YNTLASAGKNNNNKRASNDNLL), 133–158 (TSSTTTATTSNNILTSPSYRESNYSS), and 189–219 (SRVKSPSSSVKAGSFGAPSSPTSGIPNPKSS). Low complexity-rich tracts occupy residues 16–32 (NCSTNSNSSQQQLTTPS) and 68–83 (ASAGKNNNNKRASNDN). The segment covering 205 to 217 (APSSPTSGIPNPK) has biased composition (polar residues). Mn(2+)-binding residues include D301, H303, D329, and N361. H362 functions as the Proton donor in the catalytic mechanism. Mn(2+) is bound by residues H410 and H485.

The protein belongs to the PPP phosphatase family. PP-Z subfamily. The cofactor is Mn(2+).

It catalyses the reaction O-phospho-L-seryl-[protein] + H2O = L-seryl-[protein] + phosphate. The catalysed reaction is O-phospho-L-threonyl-[protein] + H2O = L-threonyl-[protein] + phosphate. In terms of biological role, phosphatase involved in the regulation of protein synthesis. Affects translational accuracy. The protein is Serine/threonine-protein phosphatase PPQ (PPQ1) of Saccharomyces cerevisiae (strain ATCC 204508 / S288c) (Baker's yeast).